A 126-amino-acid chain; its full sequence is Aspartate 1-decarboxylase 1 (126 aa).

The active-site Schiff-base intermediate with substrate; via pyruvic acid is the Ser-25. A Pyruvic acid (Ser) modification is found at Ser-25. Residue Thr-57 participates in substrate binding. Tyr-58 acts as the Proton donor in catalysis. 73 to 75 (GSA) serves as a coordination point for substrate.

This sequence belongs to the PanD family. As to quaternary structure, heterooctamer of four alpha and four beta subunits. It depends on pyruvate as a cofactor. In terms of processing, is synthesized initially as an inactive proenzyme, which is activated by self-cleavage at a specific serine bond to produce a beta-subunit with a hydroxyl group at its C-terminus and an alpha-subunit with a pyruvoyl group at its N-terminus.

It is found in the cytoplasm. It carries out the reaction L-aspartate + H(+) = beta-alanine + CO2. The protein operates within cofactor biosynthesis; (R)-pantothenate biosynthesis; beta-alanine from L-aspartate: step 1/1. In terms of biological role, catalyzes the pyruvoyl-dependent decarboxylation of aspartate to produce beta-alanine. This chain is Aspartate 1-decarboxylase 1, found in Polaromonas sp. (strain JS666 / ATCC BAA-500).